We begin with the raw amino-acid sequence, 209 residues long: Thiamine-phosphate synthase (209 aa).

Residues 40-44 (QLREK) and N72 contribute to the 4-amino-2-methyl-5-(diphosphooxymethyl)pyrimidine site. Residues D73 and D92 each coordinate Mg(2+). Position 111 (S111) interacts with 4-amino-2-methyl-5-(diphosphooxymethyl)pyrimidine. Residue 137–139 (TNS) participates in 2-[(2R,5Z)-2-carboxy-4-methylthiazol-5(2H)-ylidene]ethyl phosphate binding. K140 lines the 4-amino-2-methyl-5-(diphosphooxymethyl)pyrimidine pocket. Residues G167 and 187–188 (IS) each bind 2-[(2R,5Z)-2-carboxy-4-methylthiazol-5(2H)-ylidene]ethyl phosphate.

Belongs to the thiamine-phosphate synthase family. Mg(2+) is required as a cofactor.

The catalysed reaction is 2-[(2R,5Z)-2-carboxy-4-methylthiazol-5(2H)-ylidene]ethyl phosphate + 4-amino-2-methyl-5-(diphosphooxymethyl)pyrimidine + 2 H(+) = thiamine phosphate + CO2 + diphosphate. The enzyme catalyses 2-(2-carboxy-4-methylthiazol-5-yl)ethyl phosphate + 4-amino-2-methyl-5-(diphosphooxymethyl)pyrimidine + 2 H(+) = thiamine phosphate + CO2 + diphosphate. It catalyses the reaction 4-methyl-5-(2-phosphooxyethyl)-thiazole + 4-amino-2-methyl-5-(diphosphooxymethyl)pyrimidine + H(+) = thiamine phosphate + diphosphate. It participates in cofactor biosynthesis; thiamine diphosphate biosynthesis; thiamine phosphate from 4-amino-2-methyl-5-diphosphomethylpyrimidine and 4-methyl-5-(2-phosphoethyl)-thiazole: step 1/1. Condenses 4-methyl-5-(beta-hydroxyethyl)thiazole monophosphate (THZ-P) and 2-methyl-4-amino-5-hydroxymethyl pyrimidine pyrophosphate (HMP-PP) to form thiamine monophosphate (TMP). This is Thiamine-phosphate synthase from Clostridium tetani (strain Massachusetts / E88).